The sequence spans 558 residues: Glypican-1 (558 aa).

A signal peptide spans 1–23 (MELRARGWWLLCAAAALVACTRG). 7 cysteine pairs are disulfide-bonded: Cys32–Cys68, Cys62–Cys256, Cys69–Cys259, Cys191–Cys343, Cys246–Cys279, Cys268–Cys415, and Cys272–Cys401. Asn79 and Asn116 each carry an N-linked (GlcNAc...) asparagine glycan. The segment at 478 to 531 (FQDASDDGSGSGSGGGCPDDACGRRVSKKSSSSRTPLIHALPGLSEQEGQKTSA) is disordered. O-linked (Xyl...) (heparan sulfate) serine glycosylation is found at Ser486, Ser488, and Ser490. The GPI-anchor amidated serine moiety is linked to residue Ser530. The propeptide at 531-558 (AATRPEPHYFFLLFLFTLVLAAARPRWR) is removed in mature form.

Belongs to the glypican family. Post-translationally, S-nitrosylated in a Cu(2+)-dependent manner. Nitric acid (NO) is released from the nitrosylated cysteines by ascorbate or by some other reducing agent, in a Cu(2+) or Zn(2+) dependent manner. This free nitric oxide is then capable of cleaving the heparan sulfate side chains. In terms of processing, N- and O-glycosylated. N-glycosylation is mainly of the complex type containing sialic acid. O-glycosylated with heparan sulfate. The heparan sulfate chains can be cleaved either by the action of heparanase or, degraded by a deaminative process that uses nitric oxide (NO) released from the S-nitrosylated cysteines. This process is triggered by ascorbate, or by some other reducing agent, in a Cu(2+)- or Zn(2+) dependent manner. Cu(2+) ions are provided by ceruloproteins such as APP, PRNP or CP which associate with GCP1 in intracellular compartments or lipid rafts. This cell-associated glypican is further processed to give rise to a medium-released species. Nervous system.

It localises to the cell membrane. The protein resides in the endosome. It is found in the secreted. The protein localises to the extracellular space. In terms of biological role, cell surface proteoglycan that bears heparan sulfate. May act as a catalyst in increasing the rate of conversion of prion protein PRPN(C) to PRNP(Sc) via associating (via the heparan sulfate side chains) with both forms of PRPN, targeting them to lipid rafts and facilitating their interaction. Required for proper skeletal muscle differentiation by sequestering FGF2 in lipid rafts preventing its binding to receptors (FGFRs) and inhibiting the FGF-mediated signaling. Binds Cu(2+) or Zn(2+) ions. Binds, via the heparan sulfate side chains, alpha-4 (V) collagen and participates in Schwann cell myelination. The polypeptide is Glypican-1 (Gpc1) (Rattus norvegicus (Rat)).